The chain runs to 150 residues: Ribosome maturation factor RimP (150 aa).

Belongs to the RimP family.

It localises to the cytoplasm. In terms of biological role, required for maturation of 30S ribosomal subunits. This Francisella tularensis subsp. holarctica (strain LVS) protein is Ribosome maturation factor RimP.